Reading from the N-terminus, the 113-residue chain is Ribonuclease P protein component (113 aa).

The protein belongs to the RnpA family. In terms of assembly, consists of a catalytic RNA component (M1 or rnpB) and a protein subunit.

It catalyses the reaction Endonucleolytic cleavage of RNA, removing 5'-extranucleotides from tRNA precursor.. Its function is as follows. RNaseP catalyzes the removal of the 5'-leader sequence from pre-tRNA to produce the mature 5'-terminus. It can also cleave other RNA substrates such as 4.5S RNA. The protein component plays an auxiliary but essential role in vivo by binding to the 5'-leader sequence and broadening the substrate specificity of the ribozyme. The polypeptide is Ribonuclease P protein component (Geotalea uraniireducens (strain Rf4) (Geobacter uraniireducens)).